The following is a 523-amino-acid chain: Occludin (523 aa).

Residues 1–20 are disordered; the sequence is MSVRPFESPPPYRPDEFKPN. Over 1–66 the chain is Cytoplasmic; sequence MSVRPFESPP…KWTSPPGVIR (66 aa). The 210-residue stretch at 60-269 folds into the MARVEL domain; that stretch reads SPPGVIRILS…IIVFAVKTRR (210 aa). The helical transmembrane segment at 67-87 threads the bilayer; it reads ILSMLVIVMCIAVFACVASTL. The Extracellular segment spans residues 88–140; the sequence is AWDRAYGTGIFGGSMNYPYGSGFGSYGGGFGGYGYGYGYGYGGYTDPRAAKGF. The chain crosses the membrane as a helical span at residues 141 to 161; it reads LLAMAAFCFIASLVIFVTSVI. Topologically, residues 162–173 are cytoplasmic; the sequence is RSGMSRTRRYYL. A helical membrane pass occupies residues 174-194; the sequence is IVIIVSAILGIMVFIATIVYI. The Extracellular portion of the chain corresponds to 195–244; it reads MGVNPTAQASGSMYGSQIYTICSQFYTPGGTGLYVDQYLYHYCVVDPQEA. Cysteine 216 and cysteine 237 form a disulfide bridge. A helical transmembrane segment spans residues 245–265; the sequence is IAIVLGFMIIVAFALIIVFAV. Residues 266–523 lie on the Cytoplasmic side of the membrane; that stretch reads KTRRKMDRYD…MVGDYDRRKT (258 aa). Serine 302 is modified (phosphoserine). The tract at residues 302–338 is disordered; the sequence is SAGTQDMPPPPSDYAERVDSPMAYSSNGKVNGKRSYP. A Phosphothreonine modification is found at threonine 305. 4 positions are modified to phosphoserine: serine 313, serine 321, serine 340, and serine 360. The segment at 363 to 408 is disordered; it reads DFRQPRYSSNDNLETPSKRTPTKGKAGKAKRTDPDHYETDYTTGGE. The segment covering 368–381 has biased composition (polar residues); that stretch reads RYSSNDNLETPSKR. Tyrosine 369 is modified (phosphotyrosine). 2 positions are modified to phosphoserine: serine 370 and serine 371. Over residues 382–391 the composition is skewed to basic residues; the sequence is TPTKGKAGKA. A compositionally biased stretch (basic and acidic residues) spans 392-401; sequence KRTDPDHYET. Residues tyrosine 399 and tyrosine 403 each carry the phosphotyrosine modification. A phosphothreonine; by PKC/PRKCH mark is found at threonine 404 and threonine 405. Phosphoserine is present on serine 409. An OCEL domain is found at 415–523; sequence EDWLREYPPI…MVGDYDRRKT (109 aa). Positions 433–489 form a coiled coil; that stretch reads YKRNFDAGLQEYKSLLAELDEVNKELSRLDRELDDYREESEEYMAAADEYNRLKQVK. Residue serine 491 is modified to Phosphoserine.

This sequence belongs to the ELL/occludin family. As to quaternary structure, interacts with TJP1/ZO1. Interacts with VAPA. Interacts with CLDN1, CLDN6, CLDN9, CLDN11, CLDN12 and CLDN17. Interacts with PLSCR1. Interacts with LSR, ILDR1 and ILDR2. Interacts with TJP2/ZO2. In terms of processing, dephosphorylated by PTPRJ.

The protein resides in the cell membrane. It localises to the cell junction. It is found in the tight junction. Its function is as follows. May play a role in the formation and regulation of the tight junction (TJ) paracellular permeability barrier. May be involved in the organization of actin in endothelial cells. This is Occludin (Ocln) from Rattus norvegicus (Rat).